Consider the following 312-residue polypeptide: Zygote arrest protein 1.L (312 aa).

Disordered stretches follow at residues 79–133 and 150–205; these read RDVG…VRFP and FQDK…DQTR. 2 stretches are compositionally biased toward polar residues: residues 86-95 and 113-128; these read NPRQDASVQC and PQQSPPEQGSPASPTK. Residues 152-196 are compositionally biased toward basic and acidic residues; sequence DKGENLSEKTEALRSEGSRGEGGRPEGKQEDGEIKEQTKMDKADQ. A 3CxxC-type zinc finger spans residues 214-297; it reads KYGYYHCKDC…RQDLCGRCKG (84 aa).

It belongs to the ZAR1 family. As to expression, ovary.

It is found in the cytoplasm. The protein resides in the cytoplasmic ribonucleoprotein granule. Functionally, mRNA-binding protein required for maternal mRNA storage, translation and degradation during oocyte maturation. Probably promotes formation of some phase-separated membraneless compartment that stores maternal mRNAs in oocytes: acts by undergoing liquid-liquid phase separation upon binding to maternal mRNAs. Binds to the 3'-UTR of maternal mRNAs in immature oocytes, inhibiting their translation. This Xenopus laevis (African clawed frog) protein is Zygote arrest protein 1.L.